A 121-amino-acid chain; its full sequence is Large ribosomal subunit protein uL18 (121 aa).

This sequence belongs to the universal ribosomal protein uL18 family. In terms of assembly, part of the 50S ribosomal subunit; part of the 5S rRNA/L5/L18/L25 subcomplex. Contacts the 5S and 23S rRNAs.

Functionally, this is one of the proteins that bind and probably mediate the attachment of the 5S RNA into the large ribosomal subunit, where it forms part of the central protuberance. This is Large ribosomal subunit protein uL18 from Moorella thermoacetica (strain ATCC 39073 / JCM 9320).